The primary structure comprises 1106 residues: Voltage-dependent calcium channel subunit alpha-2/delta-1 (1106 aa).

A signal peptide spans Met1–Glu26. Residues Glu27–Gly1076 lie on the Extracellular side of the membrane. An N-linked (GlcNAc...) asparagine glycan is attached at Asn94. Ser121 is modified (phosphoserine). Residues Asn138 and Asn186 are each glycosylated (N-linked (GlcNAc...) asparagine). Residues Asp255–Leu432 form the VWFA domain. A divalent metal cation contacts are provided by Asp261, Ser263, and Ser265. Residues Asp261 to Ser265 carry the MIDAS-like motif motif. 2 N-linked (GlcNAc...) asparagine glycosylation sites follow: Asn326 and Asn350. The cysteines at positions 406 and 1062 are disulfide-linked. Residues Trp448–Pro539 enclose the Cache domain. Asn615, Asn784, and Asn891 each carry an N-linked (GlcNAc...) asparagine glycan. A helical membrane pass occupies residues Val1077–Leu1097. The Cytoplasmic segment spans residues Val1098 to Leu1106.

The protein belongs to the calcium channel subunit alpha-2/delta family. Dimer formed of alpha-2-1 and delta-1 chains; disulfide-linked. Voltage-dependent calcium channels are multisubunit complexes, consisting of alpha-1 (CACNA1), alpha-2 (CACNA2D), beta (CACNB) and delta (CACNA2D) subunits in a 1:1:1:1 ratio. In terms of processing, proteolytically processed into subunits alpha-2-1 and delta-1 that are disulfide-linked. Skeletal muscle.

Its subcellular location is the membrane. It is found in the cell membrane. The alpha-2/delta subunit of voltage-dependent calcium channels regulates calcium current density and activation/inactivation kinetics of the calcium channel. Plays an important role in excitation-contraction coupling. This is Voltage-dependent calcium channel subunit alpha-2/delta-1 (CACNA2D1) from Oryctolagus cuniculus (Rabbit).